The sequence spans 140 residues: uncharacterized protein (140 aa).

The next 2 helical transmembrane spans lie at 4–21 (ILKIGILGFGAVFGYLFG) and 26–48 (LVKVLVCFIVADYISGLLASGYL).

The protein belongs to the bacteriophage holin family. Cp-1 holin subfamily.

Its subcellular location is the cell membrane. This is an uncharacterized protein from Listeria innocua serovar 6a (strain ATCC BAA-680 / CLIP 11262).